Here is a 402-residue protein sequence, read N- to C-terminus: Propionate kinase (402 aa).

The ATP site is built by asparagine 11 and lysine 18. Asparagine 11 provides a ligand contact to Mg(2+). Residue arginine 86 participates in substrate binding. Aspartate 143 acts as the Proton donor/acceptor in catalysis. ATP-binding positions include histidine 175, 203–207 (HLGNG), 278–280 (DLR), and 326–330 (GIGEN).

It belongs to the acetokinase family. TdcD subfamily. As to quaternary structure, homodimer. It depends on Mg(2+) as a cofactor.

The enzyme catalyses propanoate + ATP = propanoyl phosphate + ADP. It functions in the pathway amino-acid degradation; L-threonine degradation via propanoate pathway; propanoate from L-threonine: step 4/4. Catalyzes the conversion of propionyl phosphate and ADP to propionate and ATP. This Escherichia coli O157:H7 protein is Propionate kinase.